The primary structure comprises 202 residues: Superoxide dismutase [Cu-Zn], chloroplastic (202 aa).

Residues 1-48 (MASQTLVSPSPLSSHSLLRTSFSGVSVKLAPQFSTLATSNFKPLTVVA) constitute a chloroplast transit peptide. Residues histidine 94, histidine 96, and histidine 111 each contribute to the Cu cation site. A disulfide bridge connects residues cysteine 105 and cysteine 194. Zn(2+) is bound by residues histidine 111, histidine 119, histidine 128, and aspartate 131. Histidine 168 is a binding site for Cu cation.

The protein belongs to the Cu-Zn superoxide dismutase family. As to quaternary structure, homotetramer. Cu cation is required as a cofactor. Zn(2+) serves as cofactor.

The protein localises to the plastid. It localises to the chloroplast. It catalyses the reaction 2 superoxide + 2 H(+) = H2O2 + O2. Its function is as follows. Destroys radicals which are normally produced within the cells and which are toxic to biological systems. The chain is Superoxide dismutase [Cu-Zn], chloroplastic (SODCP) from Pisum sativum (Garden pea).